The following is a 361-amino-acid chain: Chorismate synthase (361 aa).

NADP(+)-binding residues include R48 and R54. FMN-binding positions include 125-127 (RSS), 238-239 (NA), G278, 293-297 (KPTSS), and R319.

Belongs to the chorismate synthase family. As to quaternary structure, homotetramer. The cofactor is FMNH2.

The enzyme catalyses 5-O-(1-carboxyvinyl)-3-phosphoshikimate = chorismate + phosphate. It functions in the pathway metabolic intermediate biosynthesis; chorismate biosynthesis; chorismate from D-erythrose 4-phosphate and phosphoenolpyruvate: step 7/7. Functionally, catalyzes the anti-1,4-elimination of the C-3 phosphate and the C-6 proR hydrogen from 5-enolpyruvylshikimate-3-phosphate (EPSP) to yield chorismate, which is the branch point compound that serves as the starting substrate for the three terminal pathways of aromatic amino acid biosynthesis. This reaction introduces a second double bond into the aromatic ring system. The chain is Chorismate synthase from Citrobacter koseri (strain ATCC BAA-895 / CDC 4225-83 / SGSC4696).